Reading from the N-terminus, the 148-residue chain is Large ribosomal subunit protein bL9 (148 aa).

This sequence belongs to the bacterial ribosomal protein bL9 family.

Its function is as follows. Binds to the 23S rRNA. The protein is Large ribosomal subunit protein bL9 of Sulfurimonas denitrificans (strain ATCC 33889 / DSM 1251) (Thiomicrospira denitrificans (strain ATCC 33889 / DSM 1251)).